Here is a 256-residue protein sequence, read N- to C-terminus: MALKLLKKLLFDRPLKNGVILNHQYKIEECLGMGGYGLVYLCTDILAQTPYVLKQLRPTKAKKEKEKVRFQQEIKLLKNIHHPQIPGFIDEFIIDGQAYYVMQFIEGENIEELLFFRKQPFTELMALQLISQLLEIIEYLHDRLIFHSDIRTPNIIINDGRLCLIDFGLAKQLTPEEMEEIKVRKQDDFFDLGETLLFLLYSQYKGKKKKNGTWLEELTLTKEVTLLLKRLLGIEEEYQHTASIREDLNRAIQSVT.

One can recognise a Protein kinase domain in the interval Tyr-25–Thr-256. ATP-binding positions include Leu-31 to Val-39 and Lys-54. Asp-149 functions as the Proton acceptor in the catalytic mechanism.

It belongs to the protein kinase superfamily. Ser/Thr protein kinase family.

It carries out the reaction L-seryl-[protein] + ATP = O-phospho-L-seryl-[protein] + ADP + H(+). The catalysed reaction is L-threonyl-[protein] + ATP = O-phospho-L-threonyl-[protein] + ADP + H(+). The protein is Probable serine/threonine-protein kinase YbdM (ybdM) of Bacillus subtilis (strain 168).